Here is a 711-residue protein sequence, read N- to C-terminus: Consortin (711 aa).

5 disordered regions span residues 1–157 (MDDS…NDPP), 294–332 (AVGT…GCHQ), 370–389 (ETAG…KDSS), 394–432 (PPTE…PGLI), and 457–496 (PRDQ…ESAL). Residues 1-650 (MDDSDPPTYS…LEQDEVGGGS (650 aa)) lie on the Cytoplasmic side of the membrane. Residues 63 to 77 (VSEQDSLNNNESFPS) show a composition bias toward polar residues. The span at 109-120 (PAKRSPRAKKSS) shows a compositional bias: basic residues. 2 stretches are compositionally biased toward basic and acidic residues: residues 396–407 (TEDHCGVARDPK) and 457–471 (PRDQ…EPRQ). Over residues 478–487 (DGKSAQSQAG) the composition is skewed to polar residues. The helical transmembrane segment at 651-671 (CILLILLCIATVFLSVGGTAL) threads the bilayer. Residues 672 to 711 (YCTLGNIESPVCTDFADNVDFYYTKLLQGVAGLKHWVYLS) lie on the Extracellular side of the membrane.

Belongs to the CNST family. As to quaternary structure, interacts with connexins GJA1/CX43, GJB1/CX32, GJB2/CX26, GJB3/CX31, GJB6/CX30 and GJC1/CX45. Also interacts with GGA1 and GGA2. Does not interact with PANX1.

It is found in the cell membrane. It localises to the golgi apparatus. The protein resides in the trans-Golgi network membrane. Its subcellular location is the cytoplasmic vesicle. The protein localises to the secretory vesicle. Its function is as follows. Required for targeting of connexins to the plasma membrane. The polypeptide is Consortin (Cnst) (Mus musculus (Mouse)).